The chain runs to 231 residues: tRNA1(Val) (adenine(37)-N6)-methyltransferase (231 aa).

Belongs to the methyltransferase superfamily. tRNA (adenine-N(6)-)-methyltransferase family.

It localises to the cytoplasm. The enzyme catalyses adenosine(37) in tRNA1(Val) + S-adenosyl-L-methionine = N(6)-methyladenosine(37) in tRNA1(Val) + S-adenosyl-L-homocysteine + H(+). Functionally, specifically methylates the adenine in position 37 of tRNA(1)(Val) (anticodon cmo5UAC). This chain is tRNA1(Val) (adenine(37)-N6)-methyltransferase, found in Flavobacteriaceae bacterium (strain 3519-10).